A 428-amino-acid chain; its full sequence is Dihydroorotase (428 aa).

2 residues coordinate Zn(2+): His-59 and His-61. Substrate contacts are provided by residues 61–63 (HLR) and Asn-93. The Zn(2+) site is built by Asp-151, His-178, and His-231. Asn-277 is a substrate binding site. Residue Asp-304 participates in Zn(2+) binding. The active site involves Asp-304. Substrate is bound by residues His-308 and 322-323 (FG).

This sequence belongs to the metallo-dependent hydrolases superfamily. DHOase family. Class I DHOase subfamily. It depends on Zn(2+) as a cofactor.

It catalyses the reaction (S)-dihydroorotate + H2O = N-carbamoyl-L-aspartate + H(+). Its pathway is pyrimidine metabolism; UMP biosynthesis via de novo pathway; (S)-dihydroorotate from bicarbonate: step 3/3. Catalyzes the reversible cyclization of carbamoyl aspartate to dihydroorotate. The sequence is that of Dihydroorotase from Bacillus cereus (strain ZK / E33L).